The chain runs to 283 residues: uncharacterized protein (283 aa).

3 helical membrane passes run 24–44, 64–84, and 96–116; these read LFGYVINLTSAIIILISGMFI, TIAGFLSALMRYIIITFTLIA, and VIAILGAAGMAIGLALQGSLS.

It belongs to the MscS (TC 1.A.23) family.

It localises to the cell membrane. This is an uncharacterized protein from Buchnera aphidicola subsp. Schizaphis graminum (strain Sg).